Here is a 136-residue protein sequence, read N- to C-terminus: MHLFFAHILAVSIVVRITDSCAATSGTTTTTIAPTTCTTCTTDLIGIVTGNDGDMTPTSAITADANGCSVITYTCERTPVVATDVVLITFYSDSQNPTDVGTENGVGTANVVMNCVNGQWVKEGIVINDVECQIIT.

This is an uncharacterized protein from Caenorhabditis elegans.